Reading from the N-terminus, the 704-residue chain is Fibulin-1 (704 aa).

An N-terminal signal peptide occupies residues 1–25 (MDKLRGARPLRLLLLLLALLPALRG). 35 disulfides stabilise this stretch: cysteine 33–cysteine 59, cysteine 34–cysteine 66, cysteine 47–cysteine 67, cysteine 76–cysteine 107, cysteine 89–cysteine 108, cysteine 110–cysteine 134, cysteine 111–cysteine 141, cysteine 124–cysteine 142, cysteine 181–cysteine 191, cysteine 187–cysteine 200, cysteine 202–cysteine 215, cysteine 221–cysteine 234, cysteine 228–cysteine 243, cysteine 249–cysteine 261, cysteine 267–cysteine 280, cysteine 274–cysteine 289, cysteine 295–cysteine 307, cysteine 313–cysteine 326, cysteine 320–cysteine 335, cysteine 342–cysteine 355, cysteine 361–cysteine 374, cysteine 368–cysteine 383, cysteine 385–cysteine 398, cysteine 404–cysteine 416, cysteine 412–cysteine 425, cysteine 427–cysteine 440, cysteine 446–cysteine 455, cysteine 451–cysteine 464, cysteine 466–cysteine 480, cysteine 486–cysteine 499, cysteine 495–cysteine 508, cysteine 510–cysteine 524, cysteine 530–cysteine 543, cysteine 537–cysteine 552, and cysteine 557–cysteine 578. 3 Anaphylatoxin-like domains span residues 33–74 (CCDK…LEEH), 75–109 (YCSD…KCCY), and 110–142 (CCLL…RACC). Asparagine 96 is a glycosylation site (N-linked (GlcNAc...) asparagine). Positions 177–216 (LHDGCRGGGPCSQQCRDTGSSYVCSCFVGYQLQPDGVNCE) constitute an EGF-like 1 domain. Residues 217–262 (DINECITGTHSCGIGQTCVNTLGSFRCQRDTSCGTGYELTDDSRCK) enclose the EGF-like 2; calcium-binding domain. The 46-residue stretch at 263–308 (DIDECETGTHNCPPDFICQNTPGSFRCRPKLQCMNGFIQDALGNCI) folds into the EGF-like 3; calcium-binding domain. The EGF-like 4; calcium-binding domain maps to 309–356 (DINECLSTNMPCPAGQICINTDGSYTCQRISPSCGRGYHLNEDGTRCV). Positions 357–399 (DVDECSSSDQPCGEGHVCINGPGNYRCECKSGYSFDVISRTCI) constitute an EGF-like 5; calcium-binding domain. The segment at 357-441 (DVDECSSSDQ…KLSSDGRSCE (85 aa)) is self-association and FN1-binding. One can recognise an EGF-like 6; calcium-binding domain in the interval 400–441 (DINECRRYPGRLCAHKCENTPGSYYCTCTMGFKLSSDGRSCE). The 40-residue stretch at 442–481 (DLNECESSPCSQECANVYGSYQCYCRRGFQLSDIDGISCE) folds into the EGF-like 7; calcium-binding domain. Positions 482–525 (DIDECALPTGGHICSFRCINIPGSFQCTCPSTGYRLAPNARNCQ) constitute an EGF-like 8; calcium-binding domain. The 54-residue stretch at 526-579 (DIDECVAETHNCSFNETCFNIQGGFRCLSLECPENYRKSGDTVRLEKTDTIRCI) folds into the EGF-like 9; calcium-binding domain. Asparagine 536 and asparagine 540 each carry an N-linked (GlcNAc...) asparagine glycan.

Belongs to the fibulin family. Homomultimerizes and interacts with various extracellular matrix components.

The protein resides in the secreted. Its subcellular location is the extracellular space. The protein localises to the extracellular matrix. Functionally, incorporated into fibronectin-containing matrix fibers. May play a role in cell adhesion and migration along protein fibers within the extracellular matrix (ECM). Could be important for certain developmental processes and contribute to the supramolecular organization of ECM architecture, in particular to those of basement membranes. The sequence is that of Fibulin-1 (FBLN1) from Gallus gallus (Chicken).